A 54-amino-acid chain; its full sequence is Photosystem II reaction center protein K (54 aa).

Positions 1-17 (MLLEHVTITLLNNTSFA) are excised as a propeptide. The helical transmembrane segment at 29-49 (LIDVLPIIPLLFLLLAFVWQA) threads the bilayer.

This sequence belongs to the PsbK family. In terms of assembly, PSII is composed of 1 copy each of membrane proteins PsbA, PsbB, PsbC, PsbD, PsbE, PsbF, PsbH, PsbI, PsbJ, PsbK, PsbL, PsbM, PsbT, PsbY, PsbZ, Psb30/Ycf12, at least 3 peripheral proteins of the oxygen-evolving complex and a large number of cofactors. It forms dimeric complexes.

Its subcellular location is the plastid. It localises to the chloroplast thylakoid membrane. Functionally, one of the components of the core complex of photosystem II (PSII). PSII is a light-driven water:plastoquinone oxidoreductase that uses light energy to abstract electrons from H(2)O, generating O(2) and a proton gradient subsequently used for ATP formation. It consists of a core antenna complex that captures photons, and an electron transfer chain that converts photonic excitation into a charge separation. The sequence is that of Photosystem II reaction center protein K from Euglena mutabilis.